The primary structure comprises 108 residues: Protein ORFa in retron Ec67 (108 aa).

The chain is Protein ORFa in retron Ec67 from Escherichia coli.